Consider the following 278-residue polypeptide: UPF0758 protein BURPS668_0979 (278 aa).

Positions 1–64 (MQYEIVSAGE…ATAAARRGRD (64 aa)) are disordered. Low complexity predominate over residues 22–59 (AAAPAAPSSAVPSSAALSSAALSSAARPTGAPPATAAA). One can recognise an MPN domain in the interval 156 to 278 (LVDSPGAVDD…TFSFAQAGWI (123 aa)). Zn(2+) contacts are provided by histidine 227, histidine 229, and aspartate 240. Residues 227–240 (HNHPSGAVRPSAAD) carry the JAMM motif motif.

Belongs to the UPF0758 family.

The chain is UPF0758 protein BURPS668_0979 from Burkholderia pseudomallei (strain 668).